Reading from the N-terminus, the 424-residue chain is Formyl-CoA:oxalate CoA-transferase (424 aa).

Residues Q17–S18, R38, N96–A98, R104, and K136–E139 each bind CoA. Residue D168 is the Nucleophile of the active site. G247–Q249 lines the substrate pocket.

It belongs to the CoA-transferase III family. Frc subfamily. Homodimer.

The enzyme catalyses formyl-CoA + oxalate = oxalyl-CoA + formate. It functions in the pathway metabolic intermediate degradation; oxalate degradation; CO(2) and formate from oxalate: step 1/2. In terms of biological role, involved in the catabolism of oxalate and in the adapatation to low pH via the induction of the oxalate-dependent acid tolerance response (ATR). Catalyzes the transfer of the CoA moiety from formyl-CoA to oxalate. The polypeptide is Formyl-CoA:oxalate CoA-transferase (Afipia carboxidovorans (strain ATCC 49405 / DSM 1227 / KCTC 32145 / OM5) (Oligotropha carboxidovorans)).